A 282-amino-acid polypeptide reads, in one-letter code: 2-dehydro-3-deoxyphosphooctonate aldolase (282 aa).

Belongs to the KdsA family.

The protein resides in the cytoplasm. It catalyses the reaction D-arabinose 5-phosphate + phosphoenolpyruvate + H2O = 3-deoxy-alpha-D-manno-2-octulosonate-8-phosphate + phosphate. The protein operates within carbohydrate biosynthesis; 3-deoxy-D-manno-octulosonate biosynthesis; 3-deoxy-D-manno-octulosonate from D-ribulose 5-phosphate: step 2/3. It participates in bacterial outer membrane biogenesis; lipopolysaccharide biosynthesis. The sequence is that of 2-dehydro-3-deoxyphosphooctonate aldolase from Shewanella woodyi (strain ATCC 51908 / MS32).